The chain runs to 1937 residues: Collagen-like protein 7 (1937 aa).

N-linked (GlcNAc...) asparagine; by host glycosylation is found at Asn-6 and Asn-21. Disordered regions lie at residues 88–248, 294–531, 583–643, and 670–1144; these read CKGN…KGDK, NLKG…PDLG, LKGD…NQGV, and IKGD…DTAT. Collagen-like domains lie at 102 to 161, 168 to 227, 297 to 356, 363 to 422, and 453 to 512; these read GPKG…KGEK, GEKG…KGDI, GEKG…KGEK, GDKG…IGEK, and GDKG…KGDK. The span at 296-514 shows a compositional bias: basic and acidic residues; the sequence is KGEKGDKGNK…DKGDKGDKGD (219 aa). Asn-515 carries an N-linked (GlcNAc...) asparagine; by host glycan. Composition is skewed to basic and acidic residues over residues 584 to 605, 614 to 625, and 670 to 899; these read KGDK…KGDK, KGEKGDKGDKGD, and IKGD…KGDK. 5 consecutive Collagen-like domains span residues 672 to 731, 735 to 854, 867 to 926, 936 to 995, and 1023 to 1142; these read GDKG…KGDK, GNKG…KGNI, GLKG…KGDK, GIKG…KGDK, and GSKG…KGDT. Asn-902 carries an N-linked (GlcNAc...) asparagine; by host glycan. Positions 907 to 1141 are enriched in basic and acidic residues; that stretch reads YKGDKGDKGS…DKGDKGDKGD (235 aa). 35 N-linked (GlcNAc...) asparagine; by host glycosylation sites follow: Asn-1178, Asn-1192, Asn-1212, Asn-1217, Asn-1245, Asn-1246, Asn-1255, Asn-1317, Asn-1422, Asn-1427, Asn-1432, Asn-1443, Asn-1452, Asn-1477, Asn-1494, Asn-1506, Asn-1513, Asn-1533, Asn-1598, Asn-1619, Asn-1620, Asn-1632, Asn-1641, Asn-1663, Asn-1664, Asn-1672, Asn-1682, Asn-1683, Asn-1732, Asn-1735, Asn-1746, Asn-1756, Asn-1784, Asn-1842, and Asn-1934.

In terms of processing, may be hydroxylated on lysine by the viral-encoded procollagen-lysine,2-oxoglutarate 5-dioxygenase.

Its subcellular location is the virion. Its function is as follows. May participate in the formation of a layer of cross-linked glycosylated fibrils at the viral surface thus giving it a hairy-like appearance. This Acanthamoeba polyphaga mimivirus (APMV) protein is Collagen-like protein 7.